The primary structure comprises 474 residues: MRIGMRLLLGYFLLVAVAAWFVLAIFVKEVKPGVRRATEGTLIDTATLLAELARPDLLSGDPTHGQLAQAFNQLQHRPFRANIGGINKVRNEYHVYMTDAQGKVLFDSANKAVGQDYSRWNDVWLTLRGQYGARSTLQNPADPESSVMYVAAPIMDGSRLIGVLSVGKPNAAMAPVIKRSERRILWASAILLGIALVIGAGMVWWINRSIARLTRYADSVTDNKPVPLPDLGSSELRKLAQALESMRVKLEGKNYIEQYVYALTHELKSPLAAIRGAAEILREGPPPEVVARFTDNILTQNARMQALVETLLRQARLENRQEVVLTAVDVAALFRRVSEARTVQLAEKKITLHVTPTEVNVAAEPALLEQALGNLLDNAIDFTPESGCITLSAEVDQEHVTLKVLDTGSGIPDYALSRIFERFYSLPRANGQKSSGLGLAFVSEVARLFNGEVTLRNVQEGGVLASLRLHRHFT.

Over 1–6 the chain is Periplasmic; sequence MRIGMR. Residues 7–27 traverse the membrane as a helical segment; the sequence is LLLGYFLLVAVAAWFVLAIFV. Residues 28–146 are Cytoplasmic-facing; sequence KEVKPGVRRA…LQNPADPESS (119 aa). A helical membrane pass occupies residues 147 to 167; the sequence is VMYVAAPIMDGSRLIGVLSVG. At 168–183 the chain is on the periplasmic side; it reads KPNAAMAPVIKRSERR. A helical transmembrane segment spans residues 184 to 204; the sequence is ILWASAILLGIALVIGAGMVW. The 51-residue stretch at 205-255 folds into the HAMP domain; sequence WINRSIARLTRYADSVTDNKPVPLPDLGSSELRKLAQALESMRVKLEGKNY. At 205–474 the chain is on the cytoplasmic side; that stretch reads WINRSIARLT…ASLRLHRHFT (270 aa). The 212-residue stretch at 262–473 folds into the Histidine kinase domain; that stretch reads ALTHELKSPL…LASLRLHRHF (212 aa). Histidine 265 carries the post-translational modification Phosphohistidine; by autocatalysis.

In terms of processing, autophosphorylated.

It localises to the cell inner membrane. It catalyses the reaction ATP + protein L-histidine = ADP + protein N-phospho-L-histidine.. Its function is as follows. Member of the two-component regulatory system CreC/CreB involved in catabolic regulation. CreC may function as a membrane-associated protein kinase that phosphorylates CreB in response to environmental signals. CreC can also phosphorylate PhoB. The protein is Sensor protein CreC (creC) of Escherichia coli (strain K12).